We begin with the raw amino-acid sequence, 140 residues long: Putative pre-16S rRNA nuclease (140 aa).

Belongs to the YqgF nuclease family.

Its subcellular location is the cytoplasm. Its function is as follows. Could be a nuclease involved in processing of the 5'-end of pre-16S rRNA. This is Putative pre-16S rRNA nuclease from Mycoplasma pneumoniae (strain ATCC 29342 / M129 / Subtype 1) (Mycoplasmoides pneumoniae).